The following is a 178-amino-acid chain: Large ribosomal subunit protein uL16 (178 aa).

Belongs to the universal ribosomal protein uL16 family.

The chain is Large ribosomal subunit protein uL16 from Pyrobaculum calidifontis (strain DSM 21063 / JCM 11548 / VA1).